The sequence spans 176 residues: Inorganic pyrophosphatase (176 aa).

Lysine 30, arginine 44, and tyrosine 56 together coordinate substrate. Residues aspartate 66, aspartate 71, and aspartate 103 each contribute to the Mg(2+) site. Tyrosine 142 is a binding site for substrate.

The protein belongs to the PPase family. Homohexamer. Mg(2+) serves as cofactor.

It is found in the cytoplasm. It catalyses the reaction diphosphate + H2O = 2 phosphate + H(+). Catalyzes the hydrolysis of inorganic pyrophosphate (PPi) forming two phosphate ions. The chain is Inorganic pyrophosphatase from Salmonella typhi.